Consider the following 128-residue polypeptide: Aspartate 1-decarboxylase (128 aa).

Catalysis depends on Ser-25, which acts as the Schiff-base intermediate with substrate; via pyruvic acid. The residue at position 25 (Ser-25) is a Pyruvic acid (Ser). Thr-57 is a binding site for substrate. The Proton donor role is filled by Tyr-58. Position 73-75 (Gly-73–Ala-75) interacts with substrate.

The protein belongs to the PanD family. In terms of assembly, heterooctamer of four alpha and four beta subunits. Pyruvate serves as cofactor. Post-translationally, is synthesized initially as an inactive proenzyme, which is activated by self-cleavage at a specific serine bond to produce a beta-subunit with a hydroxyl group at its C-terminus and an alpha-subunit with a pyruvoyl group at its N-terminus.

It is found in the cytoplasm. The enzyme catalyses L-aspartate + H(+) = beta-alanine + CO2. It participates in cofactor biosynthesis; (R)-pantothenate biosynthesis; beta-alanine from L-aspartate: step 1/1. Functionally, catalyzes the pyruvoyl-dependent decarboxylation of aspartate to produce beta-alanine. This chain is Aspartate 1-decarboxylase, found in Burkholderia multivorans (strain ATCC 17616 / 249).